A 492-amino-acid chain; its full sequence is Protein nucleotidyltransferase YdiU (492 aa).

Residues Gly-88, Gly-90, Arg-91, Lys-111, Asp-123, Gly-124, Arg-174, and Arg-181 each contribute to the ATP site. Asp-250 (proton acceptor) is an active-site residue. 2 residues coordinate Mg(2+): Asn-251 and Asp-260. Asp-260 is an ATP binding site.

Belongs to the SELO family. The cofactor is Mg(2+). Requires Mn(2+) as cofactor.

The catalysed reaction is L-seryl-[protein] + ATP = 3-O-(5'-adenylyl)-L-seryl-[protein] + diphosphate. The enzyme catalyses L-threonyl-[protein] + ATP = 3-O-(5'-adenylyl)-L-threonyl-[protein] + diphosphate. It carries out the reaction L-tyrosyl-[protein] + ATP = O-(5'-adenylyl)-L-tyrosyl-[protein] + diphosphate. It catalyses the reaction L-histidyl-[protein] + UTP = N(tele)-(5'-uridylyl)-L-histidyl-[protein] + diphosphate. The catalysed reaction is L-seryl-[protein] + UTP = O-(5'-uridylyl)-L-seryl-[protein] + diphosphate. The enzyme catalyses L-tyrosyl-[protein] + UTP = O-(5'-uridylyl)-L-tyrosyl-[protein] + diphosphate. In terms of biological role, nucleotidyltransferase involved in the post-translational modification of proteins. It can catalyze the addition of adenosine monophosphate (AMP) or uridine monophosphate (UMP) to a protein, resulting in modifications known as AMPylation and UMPylation. This Rhodopseudomonas palustris (strain HaA2) protein is Protein nucleotidyltransferase YdiU.